We begin with the raw amino-acid sequence, 526 residues long: Protein DETOXIFICATION 43 (526 aa).

Topologically, residues 1-36 (MTETGDDLATVKKPIPFLVIFKDLRHVFSRDTTGRE) are cytoplasmic. Residues 37 to 57 (ILGIAFPAALALAADPIASLI) traverse the membrane as a helical segment. Topologically, residues 58 to 59 (DT) are extracellular. The helical transmembrane segment at 60 to 80 (AFVGRLGAVQLAAVGVSIAIF) threads the bilayer. The Cytoplasmic segment spans residues 81–170 (NQASRITIFP…NKKEKRTIRT (90 aa)). Residues 133-166 (ISSPTSNDTNQPQQPPAPDTKSNSGNKSNKKEKR) form a disordered region. A compositionally biased stretch (polar residues) spans 134-144 (SSPTSNDTNQP). The chain crosses the membrane as a helical span at residues 171 to 191 (ASTAMILGLILGLVQAIFLIF). At 192–215 (SSKLLLGVMGVKPNSPMLSPAHKY) the chain is on the extracellular side. Residues 216-236 (LSIRALGAPALLLSLAMQGIF) form a helical membrane-spanning segment. Topologically, residues 237 to 244 (RGFKDTKT) are cytoplasmic. The helical transmembrane segment at 245–267 (PLFATVVADVINIVLDPIFIFVL) threads the bilayer. The Extracellular portion of the chain corresponds to 268–270 (RLG). The helical transmembrane segment at 271–293 (IIGAAIAHVISQYFMTLILFVFL) threads the bilayer. Residues 294 to 316 (AKKVNLIPPNFGDLQFGRFLKNG) are Cytoplasmic-facing. Residues 317-337 (LLLLARTIAVTFCQTLAAAMA) form a helical membrane-spanning segment. Topologically, residues 338-353 (ARLGTTPMAAFQICLQ) are extracellular. The chain crosses the membrane as a helical span at residues 354–374 (VWLTSSLLNDGLAVAGQAILA). The Cytoplasmic segment spans residues 375–396 (CSFAEKDYNKVTAVASRVLQMG). A helical transmembrane segment spans residues 397–417 (FVLGLGLSVFVGLGLYFGAGV). The Extracellular portion of the chain corresponds to 418–426 (FSKDPAVIH). Residues 427 to 447 (LMAIGIPFIAATQPINSLAFV) traverse the membrane as a helical segment. Over 448–457 (LDGVNFGASD) the chain is Cytoplasmic. A helical transmembrane segment spans residues 458 to 478 (FAYTAYSMVGVAAISIAAVIY). Residues 479–484 (MAKTNG) lie on the Extracellular side of the membrane. The helical transmembrane segment at 485–505 (FIGIWIALTIYMALRAITGIA) threads the bilayer. Residues 506-526 (RMATGTGPWRFLRGRSSSSSS) lie on the Cytoplasmic side of the membrane.

This sequence belongs to the multi antimicrobial extrusion (MATE) (TC 2.A.66.1) family. As to expression, expressed in roots in the pericycle and cells internal to the pericycle and surrounding the vascular tissue. Also expressed in seed and flower.

It localises to the cell membrane. Citrate transporter responsible for loading citrate into xylem tissues, which helps facilitate iron transport to shoots. Mediates the citrate release in the apoplastic spaces during plant development allowing iron nutrition between symplastically disconnected tissues. This is Protein DETOXIFICATION 43 from Arabidopsis thaliana (Mouse-ear cress).